Reading from the N-terminus, the 236-residue chain is Purine nucleoside phosphorylase DeoD-type (236 aa).

His-4 contacts a purine D-ribonucleoside. Phosphate is bound by residues Gly-20, Arg-24, Arg-43, and 87-90 (RVGT). Residues 179-181 (EME) and 203-204 (SD) contribute to the a purine D-ribonucleoside site. The active-site Proton donor is Asp-204.

This sequence belongs to the PNP/UDP phosphorylase family. As to quaternary structure, homohexamer; trimer of homodimers.

The catalysed reaction is a purine D-ribonucleoside + phosphate = a purine nucleobase + alpha-D-ribose 1-phosphate. It catalyses the reaction a purine 2'-deoxy-D-ribonucleoside + phosphate = a purine nucleobase + 2-deoxy-alpha-D-ribose 1-phosphate. Functionally, catalyzes the reversible phosphorolytic breakdown of the N-glycosidic bond in the beta-(deoxy)ribonucleoside molecules, with the formation of the corresponding free purine bases and pentose-1-phosphate. The sequence is that of Purine nucleoside phosphorylase DeoD-type from Streptococcus pneumoniae (strain CGSP14).